The sequence spans 330 residues: Ketol-acid reductoisomerase (NADP(+)) (330 aa).

In terms of domain architecture, KARI N-terminal Rossmann spans 1–181 (MKVLYDDDVN…GLTRAGVIET (181 aa)). Residues 24 to 27 (YGSQ), Arg47, Ser52, and 82 to 85 (DEIQ) each bind NADP(+). The active site involves His107. Residue Gly133 participates in NADP(+) binding. The KARI C-terminal knotted domain occupies 182 to 327 (TYREETETDL…KNLRIACGLQ (146 aa)). Residues Asp190, Glu194, Glu226, and Glu230 each coordinate Mg(2+). A substrate-binding site is contributed by Ser251.

The protein belongs to the ketol-acid reductoisomerase family. It depends on Mg(2+) as a cofactor.

The enzyme catalyses (2R)-2,3-dihydroxy-3-methylbutanoate + NADP(+) = (2S)-2-acetolactate + NADPH + H(+). It catalyses the reaction (2R,3R)-2,3-dihydroxy-3-methylpentanoate + NADP(+) = (S)-2-ethyl-2-hydroxy-3-oxobutanoate + NADPH + H(+). Its pathway is amino-acid biosynthesis; L-isoleucine biosynthesis; L-isoleucine from 2-oxobutanoate: step 2/4. The protein operates within amino-acid biosynthesis; L-valine biosynthesis; L-valine from pyruvate: step 2/4. Involved in the biosynthesis of branched-chain amino acids (BCAA). Catalyzes an alkyl-migration followed by a ketol-acid reduction of (S)-2-acetolactate (S2AL) to yield (R)-2,3-dihydroxy-isovalerate. In the isomerase reaction, S2AL is rearranged via a Mg-dependent methyl migration to produce 3-hydroxy-3-methyl-2-ketobutyrate (HMKB). In the reductase reaction, this 2-ketoacid undergoes a metal-dependent reduction by NADPH to yield (R)-2,3-dihydroxy-isovalerate. The protein is Ketol-acid reductoisomerase (NADP(+)) of Methanosphaera stadtmanae (strain ATCC 43021 / DSM 3091 / JCM 11832 / MCB-3).